Here is a 280-residue protein sequence, read N- to C-terminus: Undecaprenyl-diphosphatase (280 aa).

8 helical membrane-spanning segments follow: residues 3-23 (IILL…EFLP), 45-65 (VDLF…YDYW), 88-108 (QLGL…FTFA), 115-135 (LFDP…IFYV), 150-170 (VGLK…IPGT), 191-211 (AEFS…LDLL), 225-245 (VLGI…RLLV), and 255-275 (IFAW…WGFG).

It belongs to the UppP family.

It is found in the cell inner membrane. The enzyme catalyses di-trans,octa-cis-undecaprenyl diphosphate + H2O = di-trans,octa-cis-undecaprenyl phosphate + phosphate + H(+). Functionally, catalyzes the dephosphorylation of undecaprenyl diphosphate (UPP). Confers resistance to bacitracin. The chain is Undecaprenyl-diphosphatase from Psychrobacter arcticus (strain DSM 17307 / VKM B-2377 / 273-4).